A 535-amino-acid polypeptide reads, in one-letter code: Berberine bridge enzyme-like 3 (535 aa).

The first 19 residues, 1–19, serve as a signal peptide directing secretion; sequence MKEALFGLYLVLLVSGLEA. Cys-32 and Cys-95 are oxidised to a cystine. A glycan (N-linked (GlcNAc...) asparagine) is linked at Asn-52. The region spanning 73 to 247 is the FAD-binding PCMH-type domain; it reads NNKNLLAIVV…LSWKINLVEV (175 aa). The 6-(S-cysteinyl)-8alpha-(pros-histidyl)-FAD (His-Cys) cross-link spans 110–172; it reads HDNEGLSYVS…QTLAFPAGIC (63 aa). Asn-214, Asn-257, Asn-292, Asn-321, Asn-341, Asn-415, Asn-439, and Asn-444 each carry an N-linked (GlcNAc...) asparagine glycan.

The protein belongs to the oxygen-dependent FAD-linked oxidoreductase family. FAD serves as cofactor. The FAD cofactor is bound via a bicovalent 6-S-cysteinyl, 8alpha-N1-histidyl FAD linkage.

It is found in the endoplasmic reticulum. Its subcellular location is the cell membrane. The protein resides in the secreted. It localises to the cell wall. Flavin-dependent oxidoreductase involved in the biosynthetic pathway to 4-hydroxyindole-3-carbonyl nitrile (4-OH-ICN), a cyanogenic metabolite required for inducible pathogen defense. Converts indole cyanohydrin into indole-3-carbonyl nitrile (ICN). In Arabidopsis thaliana (Mouse-ear cress), this protein is Berberine bridge enzyme-like 3.